Reading from the N-terminus, the 587-residue chain is Barrierpepsin (587 aa).

The N-terminal stretch at 1 to 24 (MSAINHLCLKLILASFAIINTITA) is a signal peptide. Residues 45 to 393 (YATTLDIGTP…DLDNYKISLA (349 aa)) form the Peptidase A1 domain. The active site involves D63. N84, N90, and N268 each carry an N-linked (GlcNAc...) asparagine glycan. D287 is an active-site residue. N308 carries an N-linked (GlcNAc...) asparagine glycan. A disulfide bridge connects residues C322 and C358. Residues N366, N398, N468, N503, and N551 are each glycosylated (N-linked (GlcNAc...) asparagine). Positions 466–505 (SRNCSTKMPGTRSTTVLSKPTQNSAMHQSTGAVTQTSNET) are disordered.

This sequence belongs to the peptidase A1 family.

It is found in the secreted. The enzyme catalyses Selective cleavage of 6-Leu-|-Lys-7 bond in the pheromone alpha-mating factor.. Its function is as follows. This protein called 'barrier activity' is excreted by yeast cells mating type a. It is probably a protease that cleaves alpha-factor and thus acts as an antagonist of this mating pheromone and establishes optimal pheromone concentration for conjugation. This Saccharomyces cerevisiae (strain ATCC 204508 / S288c) (Baker's yeast) protein is Barrierpepsin (BAR1).